The sequence spans 331 residues: MDIYDDKGLQTIKLFNNEFDCIRNDIRELFKHVTDSDSIQLPMEDNSDIIENIRKILYRRLKNVECVDIDSTITFMKYDPNDDNKRTCSNWVPLTNNYMEYCLVIYLETPICGGKIKLYHPTGNIKSDKDIMFAKTLDFKSKKVLTGRKTIAVLDISVSYNRSMTTIHYNDDVDIDIHTDKNGKELCYCYITIDDHYLVDVETIGVIVNRSGKCLLVNNHLGIGIVKDKRISDSFGDVCMDTIFDFSEARELFSLTNDDNRNIAWDTDKLDDDTDIWTPVTEDDYKFLSRLVLYAKSQSDTVFDYYVLTGDTEPPTVFIFKVTRFYFNMPK.

Belongs to the poxviridae C4/C10 protein family.

In Vaccinia virus (strain Western Reserve) (VACV), this protein is Protein C10.